The following is a 277-amino-acid chain: Transcription antiterminator LicT (277 aa).

PRD domains lie at 65–170 (DIPI…EEMP) and 171–277 (NIIN…VKQA).

It belongs to the transcriptional antiterminator BglG family. Post-translationally, phosphorylated.

Mediates positive regulation of the glucanase operon (licST) by functioning as an antiterminator factor of transcription. Prevents termination at terminator lic-t. The chain is Transcription antiterminator LicT (licT) from Bacillus subtilis (strain 168).